Consider the following 442-residue polypeptide: HTH-type transcriptional regulator NorG (442 aa).

One can recognise an HTH gntR-type domain in the interval 2–46 (KIPSHRQLAIQYNVNRVTIIKSIELLEAEGFIYTKVGSGTYVNDY). Residues 6–25 (HRQLAIQYNVNRVTIIKSIE) constitute a DNA-binding region (H-T-H motif). An N6-(pyridoxal phosphate)lysine modification is found at Lys-288.

In the C-terminal section; belongs to the class-I pyridoxal-phosphate-dependent aminotransferase family. Pyridoxal 5'-phosphate serves as cofactor.

In terms of biological role, positively regulates the expression of the NorB efflux pump and negatively regulates the expression of the AbcA efflux pump. Binds specifically to the promoters of norA, norB and norC and abcA genes. Could also have an aminotransferase activity. The chain is HTH-type transcriptional regulator NorG (norG) from Staphylococcus aureus (strain USA300).